Consider the following 372-residue polypeptide: Queuine tRNA-ribosyltransferase (372 aa).

The active-site Proton acceptor is D92. Substrate is bound by residues 92–96 (DSGGY), D146, Q188, and G215. The interval 246–252 (GIGSLRE) is RNA binding. The active-site Nucleophile is D265. Residues 270-274 (TRLGR) form an RNA binding; important for wobble base 34 recognition region. Positions 303, 305, 308, and 334 each coordinate Zn(2+).

The protein belongs to the queuine tRNA-ribosyltransferase family. In terms of assembly, homodimer. Within each dimer, one monomer is responsible for RNA recognition and catalysis, while the other monomer binds to the replacement base PreQ1. The cofactor is Zn(2+).

It carries out the reaction 7-aminomethyl-7-carbaguanine + guanosine(34) in tRNA = 7-aminomethyl-7-carbaguanosine(34) in tRNA + guanine. It functions in the pathway tRNA modification; tRNA-queuosine biosynthesis. Its function is as follows. Catalyzes the base-exchange of a guanine (G) residue with the queuine precursor 7-aminomethyl-7-deazaguanine (PreQ1) at position 34 (anticodon wobble position) in tRNAs with GU(N) anticodons (tRNA-Asp, -Asn, -His and -Tyr). Catalysis occurs through a double-displacement mechanism. The nucleophile active site attacks the C1' of nucleotide 34 to detach the guanine base from the RNA, forming a covalent enzyme-RNA intermediate. The proton acceptor active site deprotonates the incoming PreQ1, allowing a nucleophilic attack on the C1' of the ribose to form the product. After dissociation, two additional enzymatic reactions on the tRNA convert PreQ1 to queuine (Q), resulting in the hypermodified nucleoside queuosine (7-(((4,5-cis-dihydroxy-2-cyclopenten-1-yl)amino)methyl)-7-deazaguanosine). The polypeptide is Queuine tRNA-ribosyltransferase (Prochlorococcus marinus (strain MIT 9215)).